Consider the following 882-residue polypeptide: Pentatricopeptide repeat-containing protein At3g03580 (882 aa).

PPR repeat units lie at residues 3–37 (TRVS…GLDS), 38–68 (SDFF…VSPA), 70–104 (NVYL…KVSP), 105–139 (DKYT…GFES), 140–170 (DLFV…MPVR), 171–205 (DLVS…WIVP), 206–240 (DSFT…GVNS), 241–271 (VVVV…MDVR), 272–307 (DSVS…KPDL), 309–340 (TVSS…GFVL), 341–371 (ESTV…MECK), 372–406 (DTVS…EEQA), 407–441 (DHIT…GICI), 442–472 (DLSV…MGTG), 473–507 (DTVT…EVVP), 508–542 (DMAT…GYES), 543–573 (ELQI…MSRR), 574–608 (DVVT…GIVP), 609–639 (DSVV…MKTH), and 645–675 (MIEH…MPIK). Residues 680–755 (IWASVLRACR…NPGYSWIEVG (76 aa)) are type E motif. The tract at residues 756-786 (KNVHVFSSGDDSAPQSEAIYKSLEILYSLMA) is type E(+) motif. A type DYW motif region spans residues 787–882 (KEGYIPDPRE…DGTCSCKDRW (96 aa)).

Belongs to the PPR family. PCMP-H subfamily.

This Arabidopsis thaliana (Mouse-ear cress) protein is Pentatricopeptide repeat-containing protein At3g03580 (PCMP-H23).